The primary structure comprises 274 residues: Elongation factor Ts (274 aa).

Positions 82 to 85 are involved in Mg(2+) ion dislocation from EF-Tu; that stretch reads TDFV.

This sequence belongs to the EF-Ts family.

The protein localises to the cytoplasm. Functionally, associates with the EF-Tu.GDP complex and induces the exchange of GDP to GTP. It remains bound to the aminoacyl-tRNA.EF-Tu.GTP complex up to the GTP hydrolysis stage on the ribosome. This is Elongation factor Ts from Flavobacterium psychrophilum (strain ATCC 49511 / DSM 21280 / CIP 103535 / JIP02/86).